Here is a 1159-residue protein sequence, read N- to C-terminus: ATP-dependent helicase/deoxyribonuclease subunit B (1159 aa).

In terms of domain architecture, UvrD-like helicase ATP-binding spans 1 to 275 (MEFNTYIGRA…TYFNTFYRYN (275 aa)). Residue 8 to 15 (GRAGTGKS) coordinates ATP. The 315-residue stretch at 269–583 (NTFYRYNNDD…SIGTMDLAKV (315 aa)) folds into the UvrD-like helicase C-terminal domain. 4 residues coordinate [4Fe-4S] cluster: Cys-784, Cys-1112, Cys-1115, and Cys-1121.

The protein belongs to the helicase family. AddB/RexB type 1 subfamily. Heterodimer of AddA and AddB. It depends on Mg(2+) as a cofactor. Requires [4Fe-4S] cluster as cofactor.

The heterodimer acts as both an ATP-dependent DNA helicase and an ATP-dependent, dual-direction single-stranded exonuclease. Recognizes the chi site generating a DNA molecule suitable for the initiation of homologous recombination. The AddB subunit has 5' -&gt; 3' nuclease activity but not helicase activity. This Staphylococcus epidermidis (strain ATCC 35984 / DSM 28319 / BCRC 17069 / CCUG 31568 / BM 3577 / RP62A) protein is ATP-dependent helicase/deoxyribonuclease subunit B.